The following is a 20-amino-acid chain: Collagenolytic protease 35 kDa 2 (20 aa).

A Peptidase S1 domain is found at 1-20 (IVGGTEVTPGEIPYQLSFQD). A disordered region spans residues 1–20 (IVGGTEVTPGEIPYQLSFQD).

It belongs to the peptidase S1 family.

The enzyme catalyses Hydrolysis of proteins, with broad specificity for peptide bonds. Native collagen is cleaved about 75% of the length of the molecule from the N-terminus. Low activity on small molecule substrates of both trypsin and chymotrypsin.. In terms of biological role, this enzyme is a serine protease capable of degrading the native triple helix of collagen. The polypeptide is Collagenolytic protease 35 kDa 2 (Chionoecetes opilio (Atlantic snow crab)).